The primary structure comprises 355 residues: Sorbitol dehydrogenase (355 aa).

At alanine 2 the chain carries N-acetylalanine. Cysteine 43 is a Zn(2+) binding site. Substrate is bound at residue tyrosine 49. Residues histidine 68 and glutamate 69 each coordinate Zn(2+). Glutamate 154 serves as a coordination point for substrate. Residues isoleucine 182, aspartate 202, arginine 207, 271–273 (VGL), and 295–297 (IFR) each bind NAD(+). Arginine 297 and tyrosine 298 together coordinate substrate.

It belongs to the zinc-containing alcohol dehydrogenase family. Homotetramer. Zn(2+) is required as a cofactor. As to expression, expressed in liver.

The protein localises to the mitochondrion membrane. It is found in the cell projection. Its subcellular location is the cilium. The protein resides in the flagellum. It carries out the reaction keto-D-fructose + NADH + H(+) = D-sorbitol + NAD(+). Polyol dehydrogenase that catalyzes the reversible NAD(+)-dependent oxidation of various sugar alcohols. Is active with D-sorbitol (D-glucitol) as substrate, leading to the C2-oxidized product D-fructose. Is a key enzyme in the polyol pathway that interconverts glucose and fructose via sorbitol, which constitutes an important alternate route for glucose metabolism. This is Sorbitol dehydrogenase (SORD) from Gallus gallus (Chicken).